We begin with the raw amino-acid sequence, 156 residues long: Ribosomal RNA large subunit methyltransferase H (156 aa).

S-adenosyl-L-methionine-binding positions include Leu73, Gly104, and 123–128 (ISSMTL).

Belongs to the RNA methyltransferase RlmH family. Homodimer.

The protein localises to the cytoplasm. The catalysed reaction is pseudouridine(1915) in 23S rRNA + S-adenosyl-L-methionine = N(3)-methylpseudouridine(1915) in 23S rRNA + S-adenosyl-L-homocysteine + H(+). Its function is as follows. Specifically methylates the pseudouridine at position 1915 (m3Psi1915) in 23S rRNA. This chain is Ribosomal RNA large subunit methyltransferase H, found in Burkholderia ambifaria (strain MC40-6).